Here is a 157-residue protein sequence, read N- to C-terminus: Cyclic pyranopterin monophosphate synthase (157 aa).

Residues 74 to 76 (MCH) and 111 to 112 (ME) contribute to the substrate site. Asp126 is an active-site residue.

This sequence belongs to the MoaC family. Homohexamer; trimer of dimers.

It carries out the reaction (8S)-3',8-cyclo-7,8-dihydroguanosine 5'-triphosphate = cyclic pyranopterin phosphate + diphosphate. Its pathway is cofactor biosynthesis; molybdopterin biosynthesis. Functionally, catalyzes the conversion of (8S)-3',8-cyclo-7,8-dihydroguanosine 5'-triphosphate to cyclic pyranopterin monophosphate (cPMP). The chain is Cyclic pyranopterin monophosphate synthase from Carboxydothermus hydrogenoformans (strain ATCC BAA-161 / DSM 6008 / Z-2901).